The sequence spans 246 residues: 3-deoxy-manno-octulosonate cytidylyltransferase (246 aa).

The protein belongs to the KdsB family.

Its subcellular location is the cytoplasm. It catalyses the reaction 3-deoxy-alpha-D-manno-oct-2-ulosonate + CTP = CMP-3-deoxy-beta-D-manno-octulosonate + diphosphate. It functions in the pathway nucleotide-sugar biosynthesis; CMP-3-deoxy-D-manno-octulosonate biosynthesis; CMP-3-deoxy-D-manno-octulosonate from 3-deoxy-D-manno-octulosonate and CTP: step 1/1. Its pathway is bacterial outer membrane biogenesis; lipopolysaccharide biosynthesis. Activates KDO (a required 8-carbon sugar) for incorporation into bacterial lipopolysaccharide in Gram-negative bacteria. The protein is 3-deoxy-manno-octulosonate cytidylyltransferase of Myxococcus xanthus (strain DK1622).